The chain runs to 272 residues: MICOS complex subunit MIC27 (272 aa).

The N-terminal 24 residues, 1 to 24 (MAAKVARLAAAASSLPFVCAVYAE), are a transit peptide targeting the mitochondrion. Residues 28-107 (SKSQLVKPKQ…YVYLKNPPPD (80 aa)) lie on the Mitochondrial intermembrane side of the membrane. A helical transmembrane segment spans residues 108-126 (FLPRVGIITISGLAGVVLA). Residues 127-134 (RKDSRFKK) are Mitochondrial matrix-facing. Residues 135 to 152 (IAYPLGLTTLGISVCYPA) form a helical membrane-spanning segment. Residues 153–272 (QAVVIAKITG…EDVDMYSTRS (120 aa)) lie on the Mitochondrial intermembrane side of the membrane. The disordered stretch occupies residues 187-272 (SKLQQESKSV…EDVDMYSTRS (86 aa)). Composition is skewed to polar residues over residues 188 to 198 (KLQQESKSVTQ) and 206 to 245 (ISNV…TVKT).

The protein belongs to the apolipoprotein O/MICOS complex subunit Mic27 family. Component of the mitochondrial contact site and cristae organizing system (MICOS) complex (also known as MINOS or MitOS complex).

Its subcellular location is the mitochondrion inner membrane. Component of the MICOS complex, a large protein complex of the mitochondrial inner membrane that plays crucial roles in the maintenance of crista junctions, inner membrane architecture, and formation of contact sites to the outer membrane. The protein is MICOS complex subunit MIC27 (APOOL) of Gallus gallus (Chicken).